The primary structure comprises 144 residues: Nucleoside diphosphate kinase (144 aa).

ATP is bound by residues Lys-11, Phe-59, Arg-87, Thr-93, Arg-104, and Asn-114. His-117 serves as the catalytic Pros-phosphohistidine intermediate.

It belongs to the NDK family. As to quaternary structure, homotetramer. Mg(2+) is required as a cofactor.

The protein resides in the cytoplasm. The catalysed reaction is a 2'-deoxyribonucleoside 5'-diphosphate + ATP = a 2'-deoxyribonucleoside 5'-triphosphate + ADP. The enzyme catalyses a ribonucleoside 5'-diphosphate + ATP = a ribonucleoside 5'-triphosphate + ADP. Major role in the synthesis of nucleoside triphosphates other than ATP. The ATP gamma phosphate is transferred to the NDP beta phosphate via a ping-pong mechanism, using a phosphorylated active-site intermediate. This is Nucleoside diphosphate kinase from Aliivibrio fischeri (strain ATCC 700601 / ES114) (Vibrio fischeri).